The following is a 97-amino-acid chain: Small ribosomal subunit protein bS20 (97 aa).

This sequence belongs to the bacterial ribosomal protein bS20 family.

Functionally, binds directly to 16S ribosomal RNA. This is Small ribosomal subunit protein bS20 from Gloeothece citriformis (strain PCC 7424) (Cyanothece sp. (strain PCC 7424)).